The primary structure comprises 167 residues: Dimethylamine corrinoid protein 3 (167 aa).

In terms of domain architecture, B12-binding N-terminal spans 1 to 44 (MNEVGVRFERGKLFLPHVMMAADAMTAGVNALKDLMPEGSASSK). Positions 45–167 (MGVIVNGTVE…AVTKAKELLA (123 aa)) constitute a B12-binding domain. Position 58 (His-58) interacts with methylcob(III)alamin.

It belongs to the methylamine corrinoid protein family.

The protein operates within one-carbon metabolism; methanogenesis from dimethylamine. Functionally, acts as a methyl group carrier between MtbB and MtbA. The sequence is that of Dimethylamine corrinoid protein 3 (mtbC3) from Methanosarcina mazei (strain ATCC BAA-159 / DSM 3647 / Goe1 / Go1 / JCM 11833 / OCM 88) (Methanosarcina frisia).